Consider the following 498-residue polypeptide: tRNA-guanine(15) transglycosylase (498 aa).

Residue Asp85 is the Nucleophile of the active site. Asp120 lines the substrate pocket. Zn(2+) contacts are provided by Cys275, Cys277, and Cys280.

The protein belongs to the archaeosine tRNA-ribosyltransferase family. The cofactor is Zn(2+).

It catalyses the reaction guanosine(15) in tRNA + 7-cyano-7-deazaguanine = 7-cyano-7-carbaguanosine(15) in tRNA + guanine. Its pathway is tRNA modification; archaeosine-tRNA biosynthesis. In terms of biological role, exchanges the guanine residue with 7-cyano-7-deazaguanine (preQ0) at position 15 in the dihydrouridine loop (D-loop) of archaeal tRNAs. This Sulfolobus acidocaldarius (strain ATCC 33909 / DSM 639 / JCM 8929 / NBRC 15157 / NCIMB 11770) protein is tRNA-guanine(15) transglycosylase.